The primary structure comprises 473 residues: Xylosidase/arabinosidase (473 aa).

Catalysis depends on aspartate 18, which acts as the Proton acceptor. Glutamate 209 serves as the catalytic Proton donor.

The protein belongs to the glycosyl hydrolase 43 family. As to quaternary structure, homotetramer.

It catalyses the reaction Hydrolysis of (1-&gt;4)-beta-D-xylans, to remove successive D-xylose residues from the non-reducing termini.. The catalysed reaction is Hydrolysis of terminal non-reducing alpha-L-arabinofuranoside residues in alpha-L-arabinosides.. The protein is Xylosidase/arabinosidase (xylA) of Thermoclostridium stercorarium (Clostridium stercorarium).